The sequence spans 374 residues: Queuine tRNA-ribosyltransferase (374 aa).

The active-site Proton acceptor is the Asp-95. Substrate-binding positions include 95-99 (DSGGF), Asp-149, Gln-191, and Gly-218. Residues 249 to 255 (GVGTYRE) are RNA binding. Asp-268 (nucleophile) is an active-site residue. The segment at 273–277 (TRWAR) is RNA binding; important for wobble base 34 recognition. 4 residues coordinate Zn(2+): Cys-306, Cys-308, Cys-311, and His-337.

The protein belongs to the queuine tRNA-ribosyltransferase family. As to quaternary structure, homodimer. Within each dimer, one monomer is responsible for RNA recognition and catalysis, while the other monomer binds to the replacement base PreQ1. Requires Zn(2+) as cofactor.

The catalysed reaction is 7-aminomethyl-7-carbaguanine + guanosine(34) in tRNA = 7-aminomethyl-7-carbaguanosine(34) in tRNA + guanine. The protein operates within tRNA modification; tRNA-queuosine biosynthesis. Catalyzes the base-exchange of a guanine (G) residue with the queuine precursor 7-aminomethyl-7-deazaguanine (PreQ1) at position 34 (anticodon wobble position) in tRNAs with GU(N) anticodons (tRNA-Asp, -Asn, -His and -Tyr). Catalysis occurs through a double-displacement mechanism. The nucleophile active site attacks the C1' of nucleotide 34 to detach the guanine base from the RNA, forming a covalent enzyme-RNA intermediate. The proton acceptor active site deprotonates the incoming PreQ1, allowing a nucleophilic attack on the C1' of the ribose to form the product. After dissociation, two additional enzymatic reactions on the tRNA convert PreQ1 to queuine (Q), resulting in the hypermodified nucleoside queuosine (7-(((4,5-cis-dihydroxy-2-cyclopenten-1-yl)amino)methyl)-7-deazaguanosine). In Nostoc sp. (strain PCC 7120 / SAG 25.82 / UTEX 2576), this protein is Queuine tRNA-ribosyltransferase.